Here is a 239-residue protein sequence, read N- to C-terminus: Large ribosomal subunit protein uL30 (239 aa).

A disordered region spans residues methionine 1–methionine 22.

The protein belongs to the universal ribosomal protein uL30 family.

In Encephalitozoon cuniculi (strain GB-M1) (Microsporidian parasite), this protein is Large ribosomal subunit protein uL30 (RPL7).